We begin with the raw amino-acid sequence, 146 residues long: Leghemoglobin alpha (146 aa).

Residues 3-146 (AFTEKQEALV…LAAAIKKAYA (144 aa)) enclose the Globin domain. Tyr-26 and Tyr-31 each carry nitrated tyrosine. Ser-46 lines the heme b pocket. The residue at position 46 (Ser-46) is a Phosphoserine. His-62 contributes to the O2 binding site. His-93 and Lys-96 together coordinate heme b. Tyr-134 carries the nitrated tyrosine modification.

Belongs to the plant globin family. In terms of assembly, monomer. Post-translationally, nitrated mainly at Tyr-31 and, to a lower extent, at Tyr-26 and Tyr-134, in effective nodules and particularly in hypoxic conditions; this mechanism may play a protective role in the symbiosis by buffering toxic peroxynitrite NO(2)(-). Nitration level decrease during nodule senescence. In terms of processing, phosphorylation at Ser-46 disrupts the molecular environment of its porphyrin ring oxygen binding pocket, thus leading to a reduced oxygen consumption and to the delivery of oxygen O(2) to symbiosomes. Root nodules.

The protein resides in the cytoplasm. It is found in the cytosol. It localises to the nucleus. In terms of biological role, leghemoglobin that reversibly binds oxygen O(2) through a pentacoordinated heme iron. In root nodules, facilitates the diffusion of oxygen to the bacteroids while preventing the bacterial nitrogenase from being inactivated by buffering dioxygen, nitric oxide and carbon monoxide, and promoting the formation of reactive oxygen species (ROS, e.g. H(2)O(2)). This role is essential for symbiotic nitrogen fixation (SNF). The polypeptide is Leghemoglobin alpha (Phaseolus vulgaris (Kidney bean)).